We begin with the raw amino-acid sequence, 437 residues long: Endoplasmic reticulum protein SC65 (437 aa).

The N-terminal stretch at 1–18 (MARVAWGLLWLLLGSAGA) is a signal peptide. N-linked (GlcNAc...) asparagine glycosylation occurs at N361. 2 stretches are compositionally biased toward acidic residues: residues 381–413 (DEMELEETEPPLEPEDALSDAEFEGEGDYEEGM) and 428–437 (AEAEPEPELA). Residues 381–437 (DEMELEETEPPLEPEDALSDAEFEGEGDYEEGMYADWWQEPDAKGDEAEAEPEPELA) form a disordered region.

The protein belongs to the leprecan family. In terms of assembly, interacts with PLOD1, P3H3 and PPIB. Identified in a complex with PLOD1 and P3H3. Detected in fibroblasts (at protein level). Detected in spleen, prostate, testis, ovary, colon, pancreas, kidney, placenta and heart.

It localises to the endoplasmic reticulum. Functionally, part of a complex composed of PLOD1, P3H3 and P3H4 that catalyzes hydroxylation of lysine residues in collagen alpha chains and is required for normal assembly and cross-linking of collagen fibrils. Required for normal bone density and normal skin stability via its role in hydroxylation of lysine residues in collagen alpha chains and in collagen fibril assembly. The sequence is that of Endoplasmic reticulum protein SC65 from Homo sapiens (Human).